Here is a 319-residue protein sequence, read N- to C-terminus: MHTYLDFEKPIAELEGKVQELKLLAQEDPSVSIGDEVSKLEQKAAQLLQETYASLTPWQKVQVARHPARPHFLDYVERLVEDFTPLAGDRLYGEDSAIVGGLGRFRGRSVMFIGHEKGSDTQGRIKHNFGMARPEGYRKAIRLMTLAERFGIPVVTLADTSGAYPGMESEERSVAEAIARSTDRCLSLGVPLISVVIGEGMSGGAIGIACGNRVLMLEHSIYSVISPEGASSILWRSSDKTKDAATAMKITAQHLHELGVIDRVLPEPVGGAHRERNQMIKETGDAIAEELKGLEKLDADSIRRVRREKFLAMGRIGFS.

The CoA carboxyltransferase C-terminal domain occupies 39 to 293 (KLEQKAAQLL…GDAIAEELKG (255 aa)).

The protein belongs to the AccA family. As to quaternary structure, acetyl-CoA carboxylase is a heterohexamer composed of biotin carboxyl carrier protein (AccB), biotin carboxylase (AccC) and two subunits each of ACCase subunit alpha (AccA) and ACCase subunit beta (AccD).

The protein resides in the cytoplasm. It carries out the reaction N(6)-carboxybiotinyl-L-lysyl-[protein] + acetyl-CoA = N(6)-biotinyl-L-lysyl-[protein] + malonyl-CoA. It functions in the pathway lipid metabolism; malonyl-CoA biosynthesis; malonyl-CoA from acetyl-CoA: step 1/1. In terms of biological role, component of the acetyl coenzyme A carboxylase (ACC) complex. First, biotin carboxylase catalyzes the carboxylation of biotin on its carrier protein (BCCP) and then the CO(2) group is transferred by the carboxyltransferase to acetyl-CoA to form malonyl-CoA. This Parvibaculum lavamentivorans (strain DS-1 / DSM 13023 / NCIMB 13966) protein is Acetyl-coenzyme A carboxylase carboxyl transferase subunit alpha.